Here is a 183-residue protein sequence, read N- to C-terminus: ATP-dependent protease subunit HslV (183 aa).

Thr7 is an active-site residue. Na(+) contacts are provided by Gly162, Cys165, and Thr168.

This sequence belongs to the peptidase T1B family. HslV subfamily. As to quaternary structure, a double ring-shaped homohexamer of HslV is capped on each side by a ring-shaped HslU homohexamer. The assembly of the HslU/HslV complex is dependent on binding of ATP.

It localises to the cytoplasm. The catalysed reaction is ATP-dependent cleavage of peptide bonds with broad specificity.. Its activity is regulated as follows. Allosterically activated by HslU binding. Functionally, protease subunit of a proteasome-like degradation complex believed to be a general protein degrading machinery. This chain is ATP-dependent protease subunit HslV, found in Alkalilimnicola ehrlichii (strain ATCC BAA-1101 / DSM 17681 / MLHE-1).